We begin with the raw amino-acid sequence, 107 residues long: uncharacterized protein (107 aa).

The helical transmembrane segment at 12-32 (IILNIFLALLLVYFIFHCIYG) threads the bilayer.

The protein resides in the membrane. This is an uncharacterized protein from Rickettsia prowazekii (strain Madrid E).